A 339-amino-acid polypeptide reads, in one-letter code: GTPase Obg (339 aa).

The Obg domain occupies 1-158 (MKFLDQVDLR…RDLTFELKLM (158 aa)). Disordered stretches follow at residues 66–86 (FAED…GEDK) and 125–148 (GNAF…PGEE). Basic and acidic residues predominate over residues 72-86 (PGGRREQTGASGEDK). The segment covering 129-138 (FKSSTNQAPR) has biased composition (polar residues). The OBG-type G domain maps to 159–329 (ADVGLVGFPN…LKYTLFDTVH (171 aa)). GTP-binding positions include 165-172 (GFPNAGKS), 190-194 (FTTLT), 212-215 (DIPG), 279-282 (SKID), and 310-312 (SAV). Mg(2+) is bound by residues serine 172 and threonine 192.

This sequence belongs to the TRAFAC class OBG-HflX-like GTPase superfamily. OBG GTPase family. Monomer. Mg(2+) serves as cofactor.

The protein resides in the cytoplasm. An essential GTPase which binds GTP, GDP and possibly (p)ppGpp with moderate affinity, with high nucleotide exchange rates and a fairly low GTP hydrolysis rate. Plays a role in control of the cell cycle, stress response, ribosome biogenesis and in those bacteria that undergo differentiation, in morphogenesis control. This is GTPase Obg from Salinibacter ruber (strain DSM 13855 / M31).